Reading from the N-terminus, the 332-residue chain is Ornithine carbamoyltransferase, catabolic (332 aa).

Carbamoyl phosphate is bound by residues 60–63 (STRT), Gln-87, Arg-111, and 138–141 (HPTQ). Residues Asn-170, Asp-230, and 234–235 (SM) each bind L-ornithine. Carbamoyl phosphate contacts are provided by residues 271–272 (CL) and Arg-316.

The protein belongs to the aspartate/ornithine carbamoyltransferase superfamily. OTCase family.

The protein resides in the cytoplasm. The catalysed reaction is carbamoyl phosphate + L-ornithine = L-citrulline + phosphate + H(+). It participates in amino-acid degradation; L-arginine degradation via ADI pathway; carbamoyl phosphate from L-arginine: step 2/2. In terms of biological role, reversibly catalyzes the transfer of the carbamoyl group from carbamoyl phosphate (CP) to the N(epsilon) atom of ornithine (ORN) to produce L-citrulline. The polypeptide is Ornithine carbamoyltransferase, catabolic (arcB) (Bacillus cereus (strain ATCC 14579 / DSM 31 / CCUG 7414 / JCM 2152 / NBRC 15305 / NCIMB 9373 / NCTC 2599 / NRRL B-3711)).